The chain runs to 284 residues: 2-dehydro-3-deoxyphosphooctonate aldolase (284 aa).

It belongs to the KdsA family.

Its subcellular location is the cytoplasm. The catalysed reaction is D-arabinose 5-phosphate + phosphoenolpyruvate + H2O = 3-deoxy-alpha-D-manno-2-octulosonate-8-phosphate + phosphate. It participates in carbohydrate biosynthesis; 3-deoxy-D-manno-octulosonate biosynthesis; 3-deoxy-D-manno-octulosonate from D-ribulose 5-phosphate: step 2/3. Its pathway is bacterial outer membrane biogenesis; lipopolysaccharide biosynthesis. The chain is 2-dehydro-3-deoxyphosphooctonate aldolase from Pectobacterium carotovorum subsp. carotovorum (strain PC1).